We begin with the raw amino-acid sequence, 37 residues long: Large ribosomal subunit protein bL36c (37 aa).

This sequence belongs to the bacterial ribosomal protein bL36 family.

Its subcellular location is the plastid. It localises to the cyanelle. The chain is Large ribosomal subunit protein bL36c (rpl36) from Cyanophora paradoxa.